The following is a 200-amino-acid chain: 3-isopropylmalate dehydratase small subunit (200 aa).

Belongs to the LeuD family. LeuD type 1 subfamily. Heterodimer of LeuC and LeuD.

It catalyses the reaction (2R,3S)-3-isopropylmalate = (2S)-2-isopropylmalate. The protein operates within amino-acid biosynthesis; L-leucine biosynthesis; L-leucine from 3-methyl-2-oxobutanoate: step 2/4. Its function is as follows. Catalyzes the isomerization between 2-isopropylmalate and 3-isopropylmalate, via the formation of 2-isopropylmaleate. In Haemophilus influenzae (strain PittEE), this protein is 3-isopropylmalate dehydratase small subunit.